The primary structure comprises 143 residues: Ribonuclease VapC33 (143 aa).

Positions 5 and 108 each coordinate Mg(2+).

It belongs to the PINc/VapC protein family. Mg(2+) serves as cofactor.

Toxic component of a type II toxin-antitoxin (TA) system. An RNase. Its toxic effect is neutralized by coexpression with cognate antitoxin VapB33. In Mycobacterium tuberculosis (strain CDC 1551 / Oshkosh), this protein is Ribonuclease VapC33.